The following is a 459-amino-acid chain: O-phospho-L-seryl-tRNA:Cys-tRNA synthase 1 (459 aa).

Residues 152-153, N257, and 280-282 each bind pyridoxal 5'-phosphate; these read AR and SGH. K283 is modified (N6-(pyridoxal phosphate)lysine).

It belongs to the SepCysS family. In terms of assembly, homodimer. Interacts with SepRS. Pyridoxal 5'-phosphate serves as cofactor.

It catalyses the reaction O-phospho-L-seryl-tRNA(Cys) + hydrogen sulfide + H(+) = L-cysteinyl-tRNA(Cys) + phosphate. Functionally, converts O-phospho-L-seryl-tRNA(Cys) (Sep-tRNA(Cys)) to L-cysteinyl-tRNA(Cys) (Cys-tRNA(Cys)). In Methanococcoides burtonii (strain DSM 6242 / NBRC 107633 / OCM 468 / ACE-M), this protein is O-phospho-L-seryl-tRNA:Cys-tRNA synthase 1.